Consider the following 277-residue polypeptide: Inositol monophosphatase 1 (277 aa).

Residues Glu-70, Asp-90, Ile-92, and Asp-93 each contribute to the Mg(2+) site. Glu-70 provides a ligand contact to substrate. Substrate is bound at residue Ile-92–Thr-95. Phosphothreonine is present on Thr-168. Substrate is bound by residues Gly-194–Ala-196, Glu-213, and Asp-220. Asp-220 contacts Mg(2+).

It belongs to the inositol monophosphatase superfamily. In terms of assembly, homodimer. Requires Mg(2+) as cofactor.

Its subcellular location is the cytoplasm. The enzyme catalyses a myo-inositol phosphate + H2O = myo-inositol + phosphate. The catalysed reaction is 1D-myo-inositol 1-phosphate + H2O = myo-inositol + phosphate. It carries out the reaction 1D-myo-inositol 2-phosphate + H2O = myo-inositol + phosphate. It catalyses the reaction 1D-myo-inositol 3-phosphate + H2O = myo-inositol + phosphate. The enzyme catalyses 1D-myo-inositol 4-phosphate + H2O = myo-inositol + phosphate. The catalysed reaction is 1D-myo-inositol 5-phosphate + H2O = myo-inositol + phosphate. It carries out the reaction 1D-myo-inositol 6-phosphate + H2O = myo-inositol + phosphate. It catalyses the reaction scyllo-inositol 1-phosphate + H2O = scyllo-inositol + phosphate. The enzyme catalyses alpha-D-galactose 1-phosphate + H2O = D-galactose + phosphate. The catalysed reaction is alpha-D-glucose 1-phosphate + H2O = D-glucose + phosphate. It carries out the reaction D-glucose 6-phosphate + H2O = D-glucose + phosphate. It catalyses the reaction beta-D-fructose 1-phosphate + H2O = D-fructose + phosphate. The enzyme catalyses glycerol 2-phosphate + H2O = glycerol + phosphate. The catalysed reaction is adenosine 2'-phosphate + H2O = adenosine + phosphate. It functions in the pathway polyol metabolism; myo-inositol biosynthesis; myo-inositol from D-glucose 6-phosphate: step 2/2. Activity with myo-inositol monophosphates and D-galactose 1-phosphate is inhibited by Li(+), Ca(2+) and Mn(2+), but also by Mg(2+) at concentrations above 3 mM. Functionally, phosphatase involved in the dephosphorylation of myo-inositol monophosphates to generate myo-inositol. Is also able to dephosphorylate scyllo-inositol-phosphate, myo-inositol 1,4-diphosphate, scyllo-inositol-1,3-diphosphate and scyllo-inositol-1,4-diphosphate. Also dephosphorylates in vitro other sugar-phosphates including D-galactose-1-phosphate, glucose-1-phosphate, glucose-6-phosphate, fructose-1-phosphate, beta-glycerophosphate and 2'-AMP. Responsible for the provision of inositol required for synthesis of phosphatidylinositols and polyphosphoinositides, and involved in maintaining normal brain function. Has been implicated as the pharmacological target for lithium (Li(+)) action in brain, which is used to treat bipolar affective disorder. Is equally active with 1D-myo-inositol 1-phosphate, 1D-myo-inositol 3-phosphate and D-galactose 1-phosphate. The chain is Inositol monophosphatase 1 from Homo sapiens (Human).